The sequence spans 228 residues: Phosphatidate cytidylyltransferase (228 aa).

Helical transmembrane passes span 31 to 51 (FVVAILWFKTLFYILMILVGL), 65 to 85 (IHYLLIGFIIIPIPISLLIFL), 93 to 113 (LVIMLYFCIIWSVDTFAMIGG), 131 to 151 (WTGLIIGTISAGLIAVLVSLI), 165 to 185 (IYLFIISCILALIAQSSDLFI), and 206 to 226 (GVLDRFDSIILTAPVFFGINI).

It belongs to the CDS family.

It localises to the cell membrane. The enzyme catalyses a 1,2-diacyl-sn-glycero-3-phosphate + CTP + H(+) = a CDP-1,2-diacyl-sn-glycerol + diphosphate. The protein operates within phospholipid metabolism; CDP-diacylglycerol biosynthesis; CDP-diacylglycerol from sn-glycerol 3-phosphate: step 3/3. This chain is Phosphatidate cytidylyltransferase (cdsA), found in Rickettsia typhi (strain ATCC VR-144 / Wilmington).